The sequence spans 421 residues: Putative leucine-rich repeat protein R380 (421 aa).

7 LRR repeats span residues 48 to 69, 70 to 85, 89 to 110, 111 to 129, 130 to 150, 151 to 172, and 173 to 191; these read YLEK…QYLP, KIKE…THIP, NLIK…NQSK, LLYL…IFLP, ECRE…NYFP, NLRI…SSLI, and ELNI…PQLV.

This chain is Putative leucine-rich repeat protein R380, found in Acanthamoeba polyphaga (Amoeba).